Reading from the N-terminus, the 386-residue chain is Probable dual-specificity RNA methyltransferase RlmN (386 aa).

The active-site Proton acceptor is the Glu123. One can recognise a Radical SAM core domain in the interval 129 to 372 (YPTRTTLCIS…ATLRDTRGQD (244 aa)). Cys136 and Cys377 are disulfide-bonded. Positions 143, 147, and 150 each coordinate [4Fe-4S] cluster. S-adenosyl-L-methionine contacts are provided by residues 198 to 199 (GE), Ser232, 255 to 257 (SLH), and Asn334. Cys377 (S-methylcysteine intermediate) is an active-site residue.

Belongs to the radical SAM superfamily. RlmN family. The cofactor is [4Fe-4S] cluster.

It localises to the cytoplasm. It carries out the reaction adenosine(2503) in 23S rRNA + 2 reduced [2Fe-2S]-[ferredoxin] + 2 S-adenosyl-L-methionine = 2-methyladenosine(2503) in 23S rRNA + 5'-deoxyadenosine + L-methionine + 2 oxidized [2Fe-2S]-[ferredoxin] + S-adenosyl-L-homocysteine. The catalysed reaction is adenosine(37) in tRNA + 2 reduced [2Fe-2S]-[ferredoxin] + 2 S-adenosyl-L-methionine = 2-methyladenosine(37) in tRNA + 5'-deoxyadenosine + L-methionine + 2 oxidized [2Fe-2S]-[ferredoxin] + S-adenosyl-L-homocysteine. Functionally, specifically methylates position 2 of adenine 2503 in 23S rRNA and position 2 of adenine 37 in tRNAs. In Bifidobacterium adolescentis (strain ATCC 15703 / DSM 20083 / NCTC 11814 / E194a), this protein is Probable dual-specificity RNA methyltransferase RlmN.